The primary structure comprises 383 residues: 4-hydroxy-3-methylbut-2-en-1-yl diphosphate synthase (flavodoxin) (383 aa).

Positions 275, 278, 310, and 317 each coordinate [4Fe-4S] cluster.

It belongs to the IspG family. [4Fe-4S] cluster is required as a cofactor.

It catalyses the reaction (2E)-4-hydroxy-3-methylbut-2-enyl diphosphate + oxidized [flavodoxin] + H2O + 2 H(+) = 2-C-methyl-D-erythritol 2,4-cyclic diphosphate + reduced [flavodoxin]. Its pathway is isoprenoid biosynthesis; isopentenyl diphosphate biosynthesis via DXP pathway; isopentenyl diphosphate from 1-deoxy-D-xylulose 5-phosphate: step 5/6. Its function is as follows. Converts 2C-methyl-D-erythritol 2,4-cyclodiphosphate (ME-2,4cPP) into 1-hydroxy-2-methyl-2-(E)-butenyl 4-diphosphate. This chain is 4-hydroxy-3-methylbut-2-en-1-yl diphosphate synthase (flavodoxin), found in Dinoroseobacter shibae (strain DSM 16493 / NCIMB 14021 / DFL 12).